We begin with the raw amino-acid sequence, 673 residues long: G-protein-signaling modulator 1 (673 aa).

Residues 1–507 (MASPAPPAAE…DLLSKFQSSR (507 aa)) are mediates association with membranes. 9 TPR repeats span residues 28 to 61 (CLEL…GTED), 66 to 99 (SAIY…ARTI), 106 to 139 (AKAS…AQEQ), 146 to 178 (ARAL…PPDV), 180 to 199 (ETLH…VKEL), 206 to 239 (GRAY…AKEF), 246 to 279 (RRAY…SRQI), 286 to 319 (AQAC…AQEL), and 326 to 359 (GRAC…SQEI). The interaction with STK11/LKB1 stretch occupies residues 361-485 (DRNGELTARM…VRVQVPRTGI (125 aa)). Ser-410 carries the phosphoserine modification. Arg-418 carries the post-translational modification Omega-N-methylarginine. Over residues 420–439 (PLDREQNGETHHTGDWRGPS) the composition is skewed to basic and acidic residues. The interval 420 to 477 (PLDREQNGETHHTGDWRGPSRDSLPLPMRSRKYQEGPDAIERRPREGSHSPLDSADVR) is disordered. A phosphoserine mark is found at Ser-442, Ser-467, Ser-469, Ser-490, and Ser-491. A compositionally biased stretch (basic and acidic residues) spans 451-467 (KYQEGPDAIERRPREGS). Positions 493-515 (EECFFDLLSKFQSSRMDDQRCPL) constitute a GoLoco 1 domain. A disordered region spans residues 510-544 (DQRCPLEEGQAGAAEATAAPTLEERAAQPSVTASP). Low complexity predominate over residues 516–530 (EEGQAGAAEATAAPT). Ser-543 and Ser-567 each carry phosphoserine. 3 GoLoco domains span residues 546 to 568 (TEEF…RASV), 594 to 616 (GDEF…RCPP), and 628 to 650 (DEDF…RVDL). Disordered regions lie at residues 609 to 628 (IDDQ…TMPD) and 645 to 673 (EQRV…PGAS). At Ser-653 the chain carries Phosphoserine.

Belongs to the GPSM family. As to quaternary structure, interacts with INSC/inscuteable and FRMPD1. Interacts with GNAI1, GNAI2 and GNAI3 preferentially in their GDP-bound state. May also interact with GNAO1. Interacts with STK11/LKB1 and MACF1. Post-translationally, phosphorylation regulates interaction with G(i/o) alpha. As to expression, isoform 4 is specifically expressed in brain by neurons and also detected in testis, liver, kidney, heart and pancreas (at protein level). Highly expressed in cerebellum and subventricular zone-olfactory bulb system. Isoform 2 and isoform 3 are specifically expressed in heart and are also detected in brain.

Its subcellular location is the endoplasmic reticulum membrane. The protein localises to the golgi apparatus membrane. It is found in the cell membrane. It localises to the cytoplasm. The protein resides in the cytosol. Functionally, guanine nucleotide dissociation inhibitor (GDI) which functions as a receptor-independent activator of heterotrimeric G-protein signaling. Keeps G(i/o) alpha subunit in its GDP-bound form thus uncoupling heterotrimeric G-proteins signaling from G protein-coupled receptors. Controls spindle orientation and asymmetric cell fate of cerebral cortical progenitors. May also be involved in macroautophagy in intestinal cells. May play a role in drug addiction. The chain is G-protein-signaling modulator 1 (Gpsm1) from Rattus norvegicus (Rat).